The sequence spans 228 residues: Aquaporin Z 2 (228 aa).

Helical transmembrane passes span 9–29 (FFGT…AAAF) and 34–54 (IGFT…AYAV). Positions 63–65 (NPA) match the NPA 1 motif. 3 consecutive transmembrane segments (helical) span residues 82–102 (VPYV…LYVI), 129–149 (LVSA…VILG), and 158–178 (GFAP…SIPV). The NPA 2 motif lies at 184–186 (NPA). A helical transmembrane segment spans residues 204-224 (WLFWLAPIVGGAAGAVIWKLF).

It belongs to the MIP/aquaporin (TC 1.A.8) family. Homotetramer.

It localises to the cell inner membrane. The enzyme catalyses H2O(in) = H2O(out). In terms of biological role, channel that permits osmotically driven movement of water in both directions. It is involved in the osmoregulation and in the maintenance of cell turgor during volume expansion in rapidly growing cells. It mediates rapid entry or exit of water in response to abrupt changes in osmolarity. This is Aquaporin Z 2 from Agrobacterium fabrum (strain C58 / ATCC 33970) (Agrobacterium tumefaciens (strain C58)).